The sequence spans 518 residues: Cytochrome P450 736A117 (518 aa).

An N-linked (GlcNAc...) asparagine glycan is attached at N12. The chain crosses the membrane as a helical span at residues 17-37; that stretch reads FLQPLAFTLLAIFLVLLYTWY. N185, N275, and N356 each carry an N-linked (GlcNAc...) asparagine glycan. C460 is a heme binding site.

Belongs to the cytochrome P450 family. Heme is required as a cofactor. In terms of tissue distribution, expressed at similar levels in fruit kernel, seedlings, leaves, stems and buds.

The protein localises to the membrane. This is Cytochrome P450 736A117 from Prunus mume (Japanese apricot).